A 177-amino-acid polypeptide reads, in one-letter code: CASP-like protein 4D1 (177 aa).

Residues 1 to 20 (MTAPTAPSMAAPPAPSMVSR) are Cytoplasmic-facing. The chain crosses the membrane as a helical span at residues 21 to 41 (MTALFLRVLTFAFLMVSLVIM). Over 42–66 (TTNTGTIEIGIDEFKVRSKDFYSYR) the chain is Extracellular. A helical membrane pass occupies residues 67–87 (YMLAAIAFGLTYTILQIALTL). Over 88 to 107 (NHISKRNGAQTSGDGNLVFD) the chain is Cytoplasmic. The helical transmembrane segment at 108 to 128 (FYGDKVVSYILATGAAAAFGA) threads the bilayer. Over 129–153 (TKELKTQLAGLGGDKFFNKGYASAS) the chain is Extracellular. Residues 154 to 174 (LLLLGFVCTAILSVFSSYALP) traverse the membrane as a helical segment. Residues 175 to 177 (KKV) are Cytoplasmic-facing.

Belongs to the Casparian strip membrane proteins (CASP) family. Homodimer and heterodimers.

It is found in the cell membrane. This is CASP-like protein 4D1 from Populus trichocarpa (Western balsam poplar).